The chain runs to 98 residues: NADH-ubiquinone oxidoreductase chain 4L (98 aa).

The next 3 membrane-spanning stretches (helical) occupy residues 2–22, 29–49, and 61–81; these read TQASTNILLAFFFSLLGTLIF, TLLCLEGMMLTLFIMSTMTAL, and IVMLVFAACEAAIGLALLAMI.

The protein belongs to the complex I subunit 4L family. Core subunit of respiratory chain NADH dehydrogenase (Complex I) which is composed of 45 different subunits.

It localises to the mitochondrion inner membrane. It carries out the reaction a ubiquinone + NADH + 5 H(+)(in) = a ubiquinol + NAD(+) + 4 H(+)(out). In terms of biological role, core subunit of the mitochondrial membrane respiratory chain NADH dehydrogenase (Complex I) which catalyzes electron transfer from NADH through the respiratory chain, using ubiquinone as an electron acceptor. Part of the enzyme membrane arm which is embedded in the lipid bilayer and involved in proton translocation. This Calomys musculinus (Drylands vesper mouse) protein is NADH-ubiquinone oxidoreductase chain 4L (MT-ND4L).